Here is a 482-residue protein sequence, read N- to C-terminus: NAD(+) hydrolase ThsA (482 aa).

Residues 3-281 (EHEQKIMIDR…EEITKRFRCK (279 aa)) form the Deacetylase sirtuin-type domain. NAD(+) is bound by residues D112 and H150. H150 (proton acceptor) is an active-site residue. The SLOG (STALD) domain stretch occupies residues 282–482 (NVFLSGSAHE…SKIHDVIKLI (201 aa)). 3'cADPR-binding residues include G287, S288, L324, F355, R373, K390, G407, and E411.

It belongs to the soluble Thoeris ThsA family. As to quaternary structure, homotetramer in solution.

The enzyme catalyses NAD(+) + H2O = ADP-D-ribose + nicotinamide + H(+). With respect to regulation, in vivo probably activated by a cyclic ADP-D-ribose generated by ThsB (might be 3'cADPR). NAD(+) hydrolyzing component (NADase) of the Thoeris antiviral defense system, composed of ThsA and ThsB (maybe J591_1492). As purified, has NADase activity that is not activated by any tested cADPR isomers; binds 3'cADPR better than 2'cADPR. It was suggested the purified protein is already in a fully active state. Upon activation binds and hydrolyzes NAD(+), leading to cell death and inhibition of phage replication. This Acinetobacter baumannii (strain 532279) protein is NAD(+) hydrolase ThsA.